Consider the following 101-residue polypeptide: Urease subunit beta (101 aa).

The protein belongs to the urease beta subunit family. In terms of assembly, heterotrimer of UreA (gamma), UreB (beta) and UreC (alpha) subunits. Three heterotrimers associate to form the active enzyme.

Its subcellular location is the cytoplasm. The catalysed reaction is urea + 2 H2O + H(+) = hydrogencarbonate + 2 NH4(+). It functions in the pathway nitrogen metabolism; urea degradation; CO(2) and NH(3) from urea (urease route): step 1/1. This Rhizobium meliloti (strain 1021) (Ensifer meliloti) protein is Urease subunit beta.